The sequence spans 73 residues: Omega-hexatoxin-Ar1b (73 aa).

The first 22 residues, 1–22 (MNTATGFIVLLVLATVLGCIEA), serve as a signal peptide directing secretion. A propeptide spanning residues 23–37 (GESHVREDAMGRARR) is cleaved from the precursor. Cystine bridges form between C40/C54, C47/C58, and C53/C72.

This sequence belongs to the neurotoxin 08 (Shiva) family. 01 (omega toxin) subfamily. As to expression, expressed by the venom gland.

It localises to the secreted. In terms of biological role, insecticidal toxin that reversibly and voltage-independently blocks both mid-low- (M-LVA) and high-voltage-activated (HVA) calcium channels (Cav) in cockroach DUM neurons. Also causes a modest block of insect sodium channel currents (Nav). Induces potent excitatory symptoms, followed by flaccid paralysis leading to death in house crickets. The sequence is that of Omega-hexatoxin-Ar1b from Atrax robustus (Sydney funnel-web spider).